The following is a 146-amino-acid chain: Hemoglobin subunit beta (146 aa).

The residue at position 1 (valine 1) is an N-acetylvaline. One can recognise a Globin domain in the interval 2–146 (HLTGEEKSAV…VANALAHKYH (145 aa)). Threonine 12 carries the post-translational modification Phosphothreonine. Serine 44 is modified (phosphoserine). At lysine 59 the chain carries N6-acetyllysine. Histidine 63 is a heme b binding site. Lysine 82 carries the N6-acetyllysine modification. Histidine 92 serves as a coordination point for heme b. Residue cysteine 93 is modified to S-nitrosocysteine. Lysine 144 is modified (N6-acetyllysine).

The protein belongs to the globin family. In terms of assembly, heterotetramer of two alpha chains and two beta chains. In terms of tissue distribution, red blood cells.

In terms of biological role, involved in oxygen transport from the lung to the various peripheral tissues. The protein is Hemoglobin subunit beta (HBB) of Nycticebus coucang (Slow loris).